Consider the following 127-residue polypeptide: Gonadotropin subunit beta-1 (127 aa).

Positions 1–22 are cleaved as a signal peptide; sequence MHLAVTALCLTLAPVLARASTS. Cystine bridges form between cysteine 23–cysteine 71, cysteine 37–cysteine 86, cysteine 40–cysteine 124, cysteine 48–cysteine 102, cysteine 52–cysteine 104, and cysteine 107–cysteine 114. N-linked (GlcNAc...) asparagine glycans are attached at residues asparagine 27 and asparagine 44.

This sequence belongs to the glycoprotein hormones subunit beta family. As to quaternary structure, heterodimer of an alpha and a beta chain.

The protein resides in the secreted. In terms of biological role, involved in gametogenesis and steroidogenesis. In Anguilla japonica (Japanese eel), this protein is Gonadotropin subunit beta-1 (cgba).